The primary structure comprises 488 residues: Prostaglandin E2 receptor EP4 subtype (488 aa).

Residues 1-19 are Extracellular-facing; sequence MSTPGVNSSASLSPDRLNS. N-linked (GlcNAc...) asparagine glycosylation occurs at Asn-7. Residues 20–43 traverse the membrane as a helical segment; sequence PVTIPAVMFIFGVVGNLVAIVVLC. Over 44-55 the chain is Cytoplasmic; that stretch reads KSRKEQKETTFY. Residues 56–79 form a helical membrane-spanning segment; the sequence is TLVCGLAVTDLLGTLLVSPVTIAT. At 80–96 the chain is on the extracellular side; sequence YMKGQWPGGQPLCEYST. Cys-92 and Cys-170 are oxidised to a cystine. The chain crosses the membrane as a helical span at residues 97 to 115; it reads FILLFFSLSGLSIICAMSV. Residues 116–135 are Cytoplasmic-facing; sequence ERYLAINHAYFYSHYVDKRL. Residues 136-160 traverse the membrane as a helical segment; that stretch reads AGLTLFAVYASNVLFCALPNMGLGS. Topologically, residues 161–184 are extracellular; that stretch reads SRLQYPDTWCFIDWTTNVTAHAAY. A helical membrane pass occupies residues 185–211; the sequence is SYMYAGFSSFLILATVLCNVLVCGALL. Residues 212-267 lie on the Cytoplasmic side of the membrane; the sequence is RMHRQFMRRTSLGTEQHHAAAAASVASRGHPAASPALPRLSDFRRRRSFRRIAGAE. A helical transmembrane segment spans residues 268 to 295; the sequence is IQMVILLIATSLVVLICSIPLVVRVFVN. The Extracellular portion of the chain corresponds to 296–312; it reads QLYQPSLEREVSKNPDL. The chain crosses the membrane as a helical span at residues 313-332; it reads QAIRIASVNPILDPWIYILL. Residues 333–488 are Cytoplasmic-facing; it reads RKTVLSKAIE…ETLNLSEKCI (156 aa). The segment at 356-376 is disordered; that stretch reads RERSGQHCSDSQRTSSAMSGH. A compositionally biased stretch (polar residues) spans 361 to 376; the sequence is QHCSDSQRTSSAMSGH. Phosphoserine is present on residues Ser-374, Ser-377, Ser-379, and Ser-382. Positions 437 to 449 are enriched in polar residues; it reads SETSDSSQGQDSE. A disordered region spans residues 437 to 475; sequence SETSDSSQGQDSESVLLVDEAGGSGRAGPAPKGSSLQVT.

The protein belongs to the G-protein coupled receptor 1 family. As to quaternary structure, interacts with FEM1A. Post-translationally, phosphorylation mediates agonist-mediated desensitization by promoting cytoplasmic retention. High in intestine and in peripheral blood mononuclear cells; low in lung, kidney, thymus, uterus, vasculature and brain. Not found in liver, heart, retina oe skeletal muscle.

It is found in the cell membrane. Its function is as follows. Receptor for prostaglandin E2 (PGE2). The activity of this receptor is mediated by G(s) proteins that stimulate adenylate cyclase. Has a relaxing effect on smooth muscle. May play an important role in regulating renal hemodynamics, intestinal epithelial transport, adrenal aldosterone secretion, and uterine function. The sequence is that of Prostaglandin E2 receptor EP4 subtype (PTGER4) from Homo sapiens (Human).